A 252-amino-acid polypeptide reads, in one-letter code: 3-dehydroquinate dehydratase (252 aa).

3-dehydroquinate-binding positions include 46–48 (EWR) and Arg82. The active-site Proton donor/acceptor is His143. Lys170 functions as the Schiff-base intermediate with substrate in the catalytic mechanism. 3 residues coordinate 3-dehydroquinate: Arg212, Ser231, and Gln235.

It belongs to the type-I 3-dehydroquinase family. In terms of assembly, homodimer.

It catalyses the reaction 3-dehydroquinate = 3-dehydroshikimate + H2O. The protein operates within metabolic intermediate biosynthesis; chorismate biosynthesis; chorismate from D-erythrose 4-phosphate and phosphoenolpyruvate: step 3/7. Involved in the third step of the chorismate pathway, which leads to the biosynthesis of aromatic amino acids. Catalyzes the cis-dehydration of 3-dehydroquinate (DHQ) and introduces the first double bond of the aromatic ring to yield 3-dehydroshikimate. The chain is 3-dehydroquinate dehydratase from Listeria monocytogenes serotype 4a (strain HCC23).